Here is a 187-residue protein sequence, read N- to C-terminus: Threonylcarbamoyl-AMP synthase (187 aa).

The YrdC-like domain occupies 3–187 (QVTPSQISGI…IQTGHIFRQG (185 aa)).

It belongs to the SUA5 family. TsaC subfamily.

The protein localises to the cytoplasm. The catalysed reaction is L-threonine + hydrogencarbonate + ATP = L-threonylcarbamoyladenylate + diphosphate + H2O. Functionally, required for the formation of a threonylcarbamoyl group on adenosine at position 37 (t(6)A37) in tRNAs that read codons beginning with adenine. Catalyzes the conversion of L-threonine, HCO(3)(-)/CO(2) and ATP to give threonylcarbamoyl-AMP (TC-AMP) as the acyladenylate intermediate, with the release of diphosphate. The sequence is that of Threonylcarbamoyl-AMP synthase from Shewanella amazonensis (strain ATCC BAA-1098 / SB2B).